A 346-amino-acid chain; its full sequence is Tryptophan--tRNA ligase (346 aa).

Residues 10–12 and 18–19 contribute to the ATP site; these read QAS and GN. The 'HIGH' region motif lies at 11–19; that stretch reads ASGKQHLGN. Residue D140 participates in L-tryptophan binding. ATP is bound by residues 152–154, I191, and 200–204; these read GND and KMSKS. Residues 200–204 carry the 'KMSKS' region motif; it reads KMSKS.

This sequence belongs to the class-I aminoacyl-tRNA synthetase family. As to quaternary structure, homodimer.

The protein localises to the cytoplasm. It carries out the reaction tRNA(Trp) + L-tryptophan + ATP = L-tryptophyl-tRNA(Trp) + AMP + diphosphate + H(+). Its function is as follows. Catalyzes the attachment of tryptophan to tRNA(Trp). The protein is Tryptophan--tRNA ligase of Mycoplasma pneumoniae (strain ATCC 29342 / M129 / Subtype 1) (Mycoplasmoides pneumoniae).